Consider the following 152-residue polypeptide: Ribosome maturation factor RimP (152 aa).

The protein belongs to the RimP family.

The protein resides in the cytoplasm. Its function is as follows. Required for maturation of 30S ribosomal subunits. The protein is Ribosome maturation factor RimP of Burkholderia orbicola (strain MC0-3).